Consider the following 89-residue polypeptide: UPF0298 protein GK1096 (89 aa).

It belongs to the UPF0298 family.

The protein localises to the cytoplasm. In Geobacillus kaustophilus (strain HTA426), this protein is UPF0298 protein GK1096.